Here is an 810-residue protein sequence, read N- to C-terminus: Valine--tRNA ligase (810 aa).

The short motif at 45–55 (PTISGQLHIGH) is the 'HIGH' region element. The 'KMSKS' region signature appears at 534–538 (KMSKS). An ATP-binding site is contributed by Lys-537.

This sequence belongs to the class-I aminoacyl-tRNA synthetase family. ValS type 2 subfamily. As to quaternary structure, monomer.

Its subcellular location is the cytoplasm. The enzyme catalyses tRNA(Val) + L-valine + ATP = L-valyl-tRNA(Val) + AMP + diphosphate. Its function is as follows. Catalyzes the attachment of valine to tRNA(Val). As ValRS can inadvertently accommodate and process structurally similar amino acids such as threonine, to avoid such errors, it has a 'posttransfer' editing activity that hydrolyzes mischarged Thr-tRNA(Val) in a tRNA-dependent manner. This chain is Valine--tRNA ligase, found in Ehrlichia ruminantium (strain Welgevonden).